We begin with the raw amino-acid sequence, 633 residues long: DNA-directed RNA polymerase subunit beta' (633 aa).

Zn(2+)-binding residues include C72, C74, C87, and C90. Residues D468, D470, and D472 each contribute to the Mg(2+) site.

Belongs to the RNA polymerase beta' chain family. RpoC1 subfamily. In plastids the minimal PEP RNA polymerase catalytic core is composed of four subunits: alpha, beta, beta', and beta''. When a (nuclear-encoded) sigma factor is associated with the core the holoenzyme is formed, which can initiate transcription. It depends on Mg(2+) as a cofactor. Requires Zn(2+) as cofactor.

The protein resides in the plastid. Its subcellular location is the chloroplast. The enzyme catalyses RNA(n) + a ribonucleoside 5'-triphosphate = RNA(n+1) + diphosphate. In terms of biological role, DNA-dependent RNA polymerase catalyzes the transcription of DNA into RNA using the four ribonucleoside triphosphates as substrates. In Cyanidium caldarium (Red alga), this protein is DNA-directed RNA polymerase subunit beta'.